The primary structure comprises 184 residues: Cytosolic Prostaglandin E synthase (184 aa).

The CS domain occupies leucine 7–threonine 96. The segment at glutamate 115 to alanine 184 is disordered. Phosphoserine is present on residues serine 116, serine 127, serine 135, serine 156, and serine 162. Acidic residues predominate over residues phenylalanine 147 to aspartate 158. Basic and acidic residues predominate over residues glutamate 175–alanine 184.

This sequence belongs to the p23/wos2 family.

The protein resides in the cytoplasm. The enzyme catalyses prostaglandin H2 = prostaglandin E2. Cytosolic prostaglandin synthase that catalyzes the oxidoreduction of prostaglandin endoperoxide H2 (PGH2) to prostaglandin E2 (PGE2). Through production of PGE2 may regulate the activity of non-muscle myosin II in an autocrine or paracrine fashion; this may influence border cell and nurse cell stiffness to facilitate border cell migration during oogenesis. The polypeptide is Cytosolic Prostaglandin E synthase (Drosophila melanogaster (Fruit fly)).